The chain runs to 426 residues: Enolase (426 aa).

Q163 lines the (2R)-2-phosphoglycerate pocket. E205 serves as the catalytic Proton donor. Positions 242, 286, and 313 each coordinate Mg(2+). Residues K338, R367, S368, and K389 each coordinate (2R)-2-phosphoglycerate. K338 serves as the catalytic Proton acceptor.

This sequence belongs to the enolase family. It depends on Mg(2+) as a cofactor.

It localises to the cytoplasm. It is found in the secreted. The protein localises to the cell surface. The enzyme catalyses (2R)-2-phosphoglycerate = phosphoenolpyruvate + H2O. Its pathway is carbohydrate degradation; glycolysis; pyruvate from D-glyceraldehyde 3-phosphate: step 4/5. Catalyzes the reversible conversion of 2-phosphoglycerate (2-PG) into phosphoenolpyruvate (PEP). It is essential for the degradation of carbohydrates via glycolysis. The protein is Enolase of Helicobacter pylori (strain Shi470).